A 529-amino-acid polypeptide reads, in one-letter code: Delayed-rectifier potassium channel regulatory subunit KCNS1 (529 aa).

The Cytoplasmic segment spans residues 1–217 (MLMLLVRGTH…LTMENPGYSL (217 aa)). Residues 218–239 (PSKLFSCVSISVVLASIAAMCI) traverse the membrane as a helical segment. Over 240-270 (HSLPEYQAREAAAAVAAVAAGRSPEGVRDDP) the chain is Extracellular. The helical transmembrane segment at 271–293 (VLRRLEYFCIAWFSFEVSSRLLL) threads the bilayer. Over 294 to 304 (APSTRNFFCHP) the chain is Cytoplasmic. Residues 305-322 (LNLIDIVSVLPFYLTLLA) form a helical membrane-spanning segment. The Extracellular segment spans residues 323 to 340 (GVALGDQGGTGGKELGHL). The chain crosses the membrane as a helical; Voltage-sensor span at residues 341–361 (GKVVQVFRLMRIFRVLKLARH). Over 362 to 376 (STGLRSLGATLKHSY) the chain is Cytoplasmic. A helical transmembrane segment spans residues 377–398 (REVGILLLYLAVGVSVFSGVAY). Residues 399–411 (TAEKEEDVGFNTI) lie on the Extracellular side of the membrane. The segment at residues 412–423 (PACWWWGTVSMT) is an intramembrane region (helical). The Selectivity filter motif lies at 424–429 (TVGYGD). An intramembrane segment occupies 424–431 (TVGYGDVV). Residues 432–438 (PVTVAGK) are Extracellular-facing. A helical membrane pass occupies residues 439–467 (LAASGCILGGILVVALPITIIFNKFSHFY). Residues 468–529 (RRQKALEAAV…PSEPPHPQMY (62 aa)) are Cytoplasmic-facing. The disordered stretch occupies residues 494-529 (GVSEASLETSRETSQEGRSADLETQAPSEPPHPQMY). Positions 502 to 514 (TSRETSQEGRSAD) are enriched in basic and acidic residues.

The protein belongs to the potassium channel family. S (TC 1.A.1.2) subfamily. Kv9.1/KCNS1 sub-subfamily. As to quaternary structure, heterotetramer with KCNB1. Heterotetramer with KCNB2. Does not form homomultimers.

It is found in the cell membrane. Its function is as follows. Potassium channel regulatory subunit that modulate the delayed rectifier voltage-gated potassium channel activity of KCNB1 and KCNB2 by altering their kinetics, expression levels, and shifting the half-inactivation potential to more polarized values. While it does not form functional channels on its own, it can form functional heterotetrameric channels with KCNB1 and KCNB2. Each regulatory subunit has unique regulatory properties that can lead to extensive inhibition, significant changes in kinetics, and/or substantial shifts in the voltage dependencies of the inactivation process. The polypeptide is Delayed-rectifier potassium channel regulatory subunit KCNS1 (Chlorocebus aethiops (Green monkey)).